We begin with the raw amino-acid sequence, 146 residues long: DNA-directed RNA polymerase subunit beta (146 aa).

It belongs to the RNA polymerase beta chain family. The RNAP catalytic core consists of 2 alpha, 1 beta, 1 beta' and 1 omega subunit. When a sigma factor is associated with the core the holoenzyme is formed, which can initiate transcription.

It catalyses the reaction RNA(n) + a ribonucleoside 5'-triphosphate = RNA(n+1) + diphosphate. DNA-dependent RNA polymerase catalyzes the transcription of DNA into RNA using the four ribonucleoside triphosphates as substrates. The chain is DNA-directed RNA polymerase subunit beta (rpoB) from Liberibacter africanus (Citrus greening disease).